The primary structure comprises 305 residues: Ribonuclease Z (305 aa).

Zn(2+) is bound by residues His-63, His-65, Asp-67, His-68, His-142, Asp-209, and His-267. Asp-67 functions as the Proton acceptor in the catalytic mechanism.

The protein belongs to the RNase Z family. As to quaternary structure, homodimer. Zn(2+) is required as a cofactor.

The enzyme catalyses Endonucleolytic cleavage of RNA, removing extra 3' nucleotides from tRNA precursor, generating 3' termini of tRNAs. A 3'-hydroxy group is left at the tRNA terminus and a 5'-phosphoryl group is left at the trailer molecule.. Functionally, zinc phosphodiesterase, which displays some tRNA 3'-processing endonuclease activity. Probably involved in tRNA maturation, by removing a 3'-trailer from precursor tRNA. The chain is Ribonuclease Z from Nocardia farcinica (strain IFM 10152).